A 191-amino-acid chain; its full sequence is Ribosome maturation factor RimM (191 aa).

The 84-residue stretch at 102–185 (EEEYHVSQLI…RIEINPPKGL (84 aa)) folds into the PRC barrel domain.

This sequence belongs to the RimM family. Binds ribosomal protein uS19.

The protein localises to the cytoplasm. In terms of biological role, an accessory protein needed during the final step in the assembly of 30S ribosomal subunit, possibly for assembly of the head region. Essential for efficient processing of 16S rRNA. May be needed both before and after RbfA during the maturation of 16S rRNA. It has affinity for free ribosomal 30S subunits but not for 70S ribosomes. The chain is Ribosome maturation factor RimM from Crocosphaera subtropica (strain ATCC 51142 / BH68) (Cyanothece sp. (strain ATCC 51142)).